The primary structure comprises 859 residues: Mycobactin import ATP-binding/permease protein IrtA (859 aa).

Over 1–292 (MARGLQGVML…SRLLAPLKLP (292 aa)) the chain is Cytoplasmic. Residues 15 to 122 (ARDHTATVIE…MSLMGSSRFD (108 aa)) form the FAD-binding FR-type domain. Residues 70–73 (RAYT), 87–91 (DVVLH), and 97–98 (AS) contribute to the FAD site. The tract at residues 247–267 (HRATEPAATEPEVGAAPQPES) is disordered. A helical transmembrane segment spans residues 293–313 (LVLSGVLAALVTLAQLAPFVL). One can recognise an ABC transmembrane type-1 domain in the interval 293–575 (LVLSGVLAAL…IAYGLGGLRT (283 aa)). Over 314–334 (LVELSRLLVSGAGAHRLFTVG) the chain is Periplasmic. The chain crosses the membrane as a helical span at residues 335–355 (FAAVGLLGTGALLAAALTLWL). Over 356-408 (HVIDARFARALRLRLLSKLSRLPLGWFTSRGSGSIKKLVTDDTLALHYLVTHA) the chain is Cytoplasmic. Residues 409 to 429 (VPDAVAAVVAPVGVLVYLFVV) form a helical membrane-spanning segment. At 430 to 432 (DWR) the chain is on the periplasmic side. Residues 433–453 (VALVLFGPVLVYLTITSSLTI) form a helical membrane-spanning segment. The Cytoplasmic segment spans residues 454-519 (QSGPRIVQAQ…PLAGKKTLMD (66 aa)). A helical transmembrane segment spans residues 520–540 (LATRPATFLWLIAATGTLLVA). Over 541 to 548 (THRMDPVN) the chain is Periplasmic. A helical membrane pass occupies residues 549–569 (LLPFMFLGTTFGARLLGIAYG). The Cytoplasmic segment spans residues 570–859 (LGGLRTGLLA…AVAAAQDGTR (290 aa)). The ABC transporter domain maps to 610–843 (VVFDHVTFGY…GGRYCRLWDT (234 aa)). 643–650 (GPSGSGKS) contributes to the ATP binding site.

It belongs to the ABC transporter superfamily. Siderophore-Fe(3+) uptake transporter (SIUT) (TC 3.A.1.21) family. Forms a heterodimer with IrtB. It depends on FAD as a cofactor.

It is found in the cell inner membrane. In terms of biological role, part of the ABC transporter complex IrtAB involved in the import of iron-bound mycobactin (Fe-MBT) and carboxymycobactin (Fe-cMBT). Mycobactins are then reduced by the siderophore interaction domain to facilitate iron release in the bacterial cell. Transmembrane domains (TMD) form a pore in the membrane and the ATP-binding domain (NBD) is responsible for energy generation. Required for replication in human macrophages and in mouse lungs. The protein is Mycobactin import ATP-binding/permease protein IrtA (irtA) of Mycobacterium tuberculosis (strain ATCC 25618 / H37Rv).